Reading from the N-terminus, the 473-residue chain is Siroheme synthase (473 aa).

A precorrin-2 dehydrogenase /sirohydrochlorin ferrochelatase region spans residues 1–203; that stretch reads MNYLPIFIDL…GNKEQAINVL (203 aa). NAD(+) is bound by residues 22 to 23 and 43 to 44; these read EV and KE. At S128 the chain carries Phosphoserine. The interval 215–473 is uroporphyrinogen-III C-methyltransferase; it reads GEIILVGAGP…KNKFSTLTFI (259 aa). Position 224 (P224) interacts with S-adenosyl-L-methionine. D247 serves as the catalytic Proton acceptor. K269 functions as the Proton donor in the catalytic mechanism. S-adenosyl-L-methionine contacts are provided by residues 300–302, I305, M382, and G411; that span reads GGD.

This sequence in the N-terminal section; belongs to the precorrin-2 dehydrogenase / sirohydrochlorin ferrochelatase family. In the C-terminal section; belongs to the precorrin methyltransferase family.

The enzyme catalyses uroporphyrinogen III + 2 S-adenosyl-L-methionine = precorrin-2 + 2 S-adenosyl-L-homocysteine + H(+). It catalyses the reaction precorrin-2 + NAD(+) = sirohydrochlorin + NADH + 2 H(+). The catalysed reaction is siroheme + 2 H(+) = sirohydrochlorin + Fe(2+). The protein operates within cofactor biosynthesis; adenosylcobalamin biosynthesis; precorrin-2 from uroporphyrinogen III: step 1/1. It participates in cofactor biosynthesis; adenosylcobalamin biosynthesis; sirohydrochlorin from precorrin-2: step 1/1. Its pathway is porphyrin-containing compound metabolism; siroheme biosynthesis; precorrin-2 from uroporphyrinogen III: step 1/1. It functions in the pathway porphyrin-containing compound metabolism; siroheme biosynthesis; siroheme from sirohydrochlorin: step 1/1. The protein operates within porphyrin-containing compound metabolism; siroheme biosynthesis; sirohydrochlorin from precorrin-2: step 1/1. Its function is as follows. Multifunctional enzyme that catalyzes the SAM-dependent methylations of uroporphyrinogen III at position C-2 and C-7 to form precorrin-2 via precorrin-1. Then it catalyzes the NAD-dependent ring dehydrogenation of precorrin-2 to yield sirohydrochlorin. Finally, it catalyzes the ferrochelation of sirohydrochlorin to yield siroheme. The protein is Siroheme synthase of Buchnera aphidicola subsp. Acyrthosiphon pisum (strain APS) (Acyrthosiphon pisum symbiotic bacterium).